Reading from the N-terminus, the 224-residue chain is Uracil-DNA glycosylase 2 (224 aa).

Aspartate 64 serves as the catalytic Proton acceptor.

This sequence belongs to the uracil-DNA glycosylase (UDG) superfamily. UNG family.

Its subcellular location is the cytoplasm. It catalyses the reaction Hydrolyzes single-stranded DNA or mismatched double-stranded DNA and polynucleotides, releasing free uracil.. Its function is as follows. Excises uracil residues from the DNA which can arise as a result of misincorporation of dUMP residues by DNA polymerase or due to deamination of cytosine. This is Uracil-DNA glycosylase 2 from Listeria monocytogenes serotype 4b (strain F2365).